The sequence spans 38 residues: Photosystem II reaction center protein L (38 aa).

Residues 17-37 (SLYWGLLLIFVLAVPFSNYFF) traverse the membrane as a helical segment.

The protein belongs to the PsbL family. As to quaternary structure, PSII is composed of 1 copy each of membrane proteins PsbA, PsbB, PsbC, PsbD, PsbE, PsbF, PsbH, PsbI, PsbJ, PsbK, PsbL, PsbM, PsbT, PsbX, PsbY, PsbZ, Psb30/Ycf12, at least 3 peripheral proteins of the oxygen-evolving complex and a large number of cofactors. It forms dimeric complexes.

The protein localises to the plastid. The protein resides in the chloroplast thylakoid membrane. Its function is as follows. One of the components of the core complex of photosystem II (PSII). PSII is a light-driven water:plastoquinone oxidoreductase that uses light energy to abstract electrons from H(2)O, generating O(2) and a proton gradient subsequently used for ATP formation. It consists of a core antenna complex that captures photons, and an electron transfer chain that converts photonic excitation into a charge separation. This subunit is found at the monomer-monomer interface and is required for correct PSII assembly and/or dimerization. The chain is Photosystem II reaction center protein L from Pinus thunbergii (Japanese black pine).